A 93-amino-acid chain; its full sequence is Small ribosomal subunit protein uS19 (93 aa).

It belongs to the universal ribosomal protein uS19 family.

In terms of biological role, protein S19 forms a complex with S13 that binds strongly to the 16S ribosomal RNA. The chain is Small ribosomal subunit protein uS19 from Frankia alni (strain DSM 45986 / CECT 9034 / ACN14a).